Consider the following 1389-residue polypeptide: DNA-directed RNA polymerase subunit beta'' (1389 aa).

The Zn(2+) site is built by Cys224, Cys295, Cys302, and Cys305.

Belongs to the RNA polymerase beta' chain family. RpoC2 subfamily. In plastids the minimal PEP RNA polymerase catalytic core is composed of four subunits: alpha, beta, beta', and beta''. When a (nuclear-encoded) sigma factor is associated with the core the holoenzyme is formed, which can initiate transcription. Zn(2+) serves as cofactor.

The protein resides in the plastid. It localises to the chloroplast. It carries out the reaction RNA(n) + a ribonucleoside 5'-triphosphate = RNA(n+1) + diphosphate. In terms of biological role, DNA-dependent RNA polymerase catalyzes the transcription of DNA into RNA using the four ribonucleoside triphosphates as substrates. This Morus indica (Mulberry) protein is DNA-directed RNA polymerase subunit beta''.